We begin with the raw amino-acid sequence, 215 residues long: Cytidylate kinase (215 aa).

10-18 (GPAASGKGT) contributes to the ATP binding site.

It belongs to the cytidylate kinase family. Type 1 subfamily.

The protein localises to the cytoplasm. It catalyses the reaction CMP + ATP = CDP + ADP. The catalysed reaction is dCMP + ATP = dCDP + ADP. The sequence is that of Cytidylate kinase from Bartonella henselae (strain ATCC 49882 / DSM 28221 / CCUG 30454 / Houston 1) (Rochalimaea henselae).